Here is a 323-residue protein sequence, read N- to C-terminus: tRNA U34 carboxymethyltransferase (323 aa).

Carboxy-S-adenosyl-L-methionine is bound by residues K91, W105, K110, G130, 152 to 154 (DPT), 181 to 182 (IE), M196, Y200, and R315.

It belongs to the class I-like SAM-binding methyltransferase superfamily. CmoB family. Homotetramer.

It catalyses the reaction carboxy-S-adenosyl-L-methionine + 5-hydroxyuridine(34) in tRNA = 5-carboxymethoxyuridine(34) in tRNA + S-adenosyl-L-homocysteine + H(+). Its function is as follows. Catalyzes carboxymethyl transfer from carboxy-S-adenosyl-L-methionine (Cx-SAM) to 5-hydroxyuridine (ho5U) to form 5-carboxymethoxyuridine (cmo5U) at position 34 in tRNAs. This chain is tRNA U34 carboxymethyltransferase, found in Salmonella paratyphi A (strain ATCC 9150 / SARB42).